Consider the following 627-residue polypeptide: Anti-CBASS protein Acb1 (627 aa).

Position 105 (Tyr105) interacts with 3',3'-cGAMP. Tyr105 contacts 3',3'-cUAMP. Residues 437–474 (LADQPETESANENTEQPESGEEGEEGQPTRRAANDAKP) form a disordered region. Residues His508, Thr510, His584, and Thr586 contribute to the active site. Residues Glu614 and Trp620 each coordinate 3',3'-cGAMP. 3',3'-cUAMP is bound by residues Glu614 and Trp620.

The protein belongs to the anti-CBASS protein Acb1 family.

The enzyme catalyses 3',3'-cUAMP + H2O = U[3'-5']pAp[3'] + H(+). It carries out the reaction 3',3',3'-c-tri-AMP + H2O = A[3'-5']pA[3'-5']pAp[3'] + H(+). The catalysed reaction is 3',3',3'-cAAG + H2O = G[3'-5']pA[3'-5']pAp[3'] + H(+). It catalyses the reaction 3',3',3'-cAAG + H2O = A[3'-5']pG[3'-5']pAp[3'] + H(+). The enzyme catalyses 3',3'-cGAMP + H2O = G[3'-5']pAp[3'] + H(+). Counteracts or regulates the endogenous CBASS antiviral defense system. Phosphodiesterase that enables metal-independent hydrolysis of the host cyclic di- and trinucleotide CBASS signals such as 3'3'-cGAMP, 3'3'cUA, and 3'3'3'-cAAA. This Caulobacter sp. (strain RHG1) protein is Anti-CBASS protein Acb1.